Consider the following 135-residue polypeptide: Large ribosomal subunit protein uL16c (135 aa).

This sequence belongs to the universal ribosomal protein uL16 family. As to quaternary structure, part of the 50S ribosomal subunit.

The protein localises to the plastid. The protein resides in the chloroplast. The sequence is that of Large ribosomal subunit protein uL16c from Nymphaea alba (White water-lily).